A 488-amino-acid chain; its full sequence is Zinc metalloproteinase-disintegrin 8 (488 aa).

Positions 1-20 (MIQVLLVTICLAVFPYQGSS) are cleaved as a signal peptide. Residues 21–191 (IILESGNVND…KASQLNLPPE (171 aa)) constitute a propeptide that is removed on maturation. In terms of domain architecture, Peptidase M12B spans 198 to 396 (TYIELVVVAD…STTRCLHNEP (199 aa)). Positions 201 and 285 each coordinate Ca(2+). Asn-296 is a glycosylation site (N-linked (GlcNAc...) asparagine). Cystine bridges form between Cys-309-Cys-391, Cys-349-Cys-373, and Cys-351-Cys-356. His-334 contributes to the Zn(2+) binding site. The active site involves Glu-335. Zn(2+) contacts are provided by His-338 and His-344. Ca(2+)-binding residues include Cys-391, Asn-394, Asn-409, Glu-413, Glu-416, and Asp-419. The Disintegrin domain maps to 404 to 488 (PPFCGNYFKE…ADCPRNGLYG (85 aa)). 7 disulfides stabilise this stretch: Cys-407–Cys-426, Cys-418–Cys-436, Cys-420–Cys-431, Cys-430–Cys-453, Cys-444–Cys-450, Cys-449–Cys-474, and Cys-462–Cys-481. Residues 466 to 468 (RGD) carry the Cell attachment site motif.

It belongs to the venom metalloproteinase (M12B) family. P-II subfamily. Zn(2+) is required as a cofactor. Expressed by the venom gland.

The protein localises to the secreted. In terms of biological role, inhibits ADP-induced platelet aggregation (probably by binding integrin alpha-IIb/beta-3 (ITGA2B/ITGB3)) and degrades fibrinogen. This Crotalus adamanteus (Eastern diamondback rattlesnake) protein is Zinc metalloproteinase-disintegrin 8.